The chain runs to 162 residues: Peroxiredoxin-2B (162 aa).

One can recognise a Thioredoxin domain in the interval I4–L162. C51 serves as the catalytic Cysteine sulfenic acid (-SOH) intermediate.

It belongs to the peroxiredoxin family. Prx5 subfamily. Monomer. In terms of tissue distribution, expressed in all tissues but mostly in reproductive tissues such as buds, flowers, siliques and seeds.

It is found in the cytoplasm. The catalysed reaction is [glutaredoxin]-dithiol + a hydroperoxide = [glutaredoxin]-disulfide + an alcohol + H2O. Reduces hydrogen peroxide and alkyl hydroperoxides with reducing equivalents provided through the thioredoxin or glutaredoxin system. May be involved in intracellular redox signaling. In terms of biological role, thiol-specific peroxidase that catalyzes the reduction of hydrogen peroxide and organic hydroperoxides to water and alcohols, respectively. Plays a role in cell protection against oxidative stress by detoxifying peroxides and as sensor of hydrogen peroxide-mediated signaling events. This is Peroxiredoxin-2B (PRXIIB) from Arabidopsis thaliana (Mouse-ear cress).